A 980-amino-acid chain; its full sequence is LRR receptor-like serine/threonine-protein kinase SIK1 (980 aa).

The N-terminal stretch at 1-24 (MAAARAPWLWWWVVVVVGVAVAEA) is a signal peptide. Over 25-588 (ASGGGGGGDG…HGQRVNISKT (564 aa)) the chain is Extracellular. N-linked (GlcNAc...) asparagine glycans are attached at residues N72 and N81. 20 LRR repeats span residues 75–98 (FAVL…IGEL), 99–122 (KNLQ…IGDC), 124–146 (SLKY…ISKL), 147–170 (KQLE…LSQI), 171–194 (PNLK…IYWN), 196–218 (VLQY…MCQL), 219–242 (TGLW…IGNC), 243–265 (TSFE…NIGF), 266–289 (LQVA…IGLM), 290–312 (QALA…ILGN), 314–337 (SYTG…LGNM), 338–361 (SKLS…LGKL), 362–385 (EELF…ISSC), 387–408 (ALNK…GFQK), 409–433 (LESL…LGHI), 435–457 (NLDT…IGDL), 458–480 (EHLL…EFGN), 481–505 (LRSV…LGQL), 507–529 (NLDS…LANC), and 531–554 (SLNN…NFSK). N230 and N241 each carry an N-linked (GlcNAc...) asparagine glycan. N-linked (GlcNAc...) asparagine glycosylation is found at N312 and N336. Residues N381, N399, and N416 are each glycosylated (N-linked (GlcNAc...) asparagine). N-linked (GlcNAc...) asparagine glycosylation is found at N464 and N493. Residues N536, N541, N551, and N584 are each glycosylated (N-linked (GlcNAc...) asparagine). Residues 589 to 609 (AIACIILGFIILLCVLLLAIY) form a helical membrane-spanning segment. Over 610–980 (KTNQPQPLVK…FGEVISKHTM (371 aa)) the chain is Cytoplasmic. Residues 653–923 (LSEKYIIGYG…EVARVLLSLL (271 aa)) form the Protein kinase domain. ATP is bound by residues 659–667 (IGYGASSTV) and K681. D778 serves as the catalytic Proton acceptor.

This sequence belongs to the protein kinase superfamily. Ser/Thr protein kinase family. Post-translationally, autophosphorylated. As to expression, expressed in nodes, vascular bundles of stems, and anthers.

The protein localises to the cell membrane. The catalysed reaction is L-seryl-[protein] + ATP = O-phospho-L-seryl-[protein] + ADP + H(+). The enzyme catalyses L-threonyl-[protein] + ATP = O-phospho-L-threonyl-[protein] + ADP + H(+). Receptor kinase involved in salt drought stress responses. Acts as a positive regulator of salt and drought tolerance. May promote salt and drought tolerance through the induction of the activities of antioxidative enzymes, such as peroxidase, superoxide dismutase and catalase. May be involved in the control of stomatal development in leaf epidermis. Possesses kinase activity in vitro. Does not seem to be involved in heat tolerance. The protein is LRR receptor-like serine/threonine-protein kinase SIK1 of Oryza sativa subsp. japonica (Rice).